A 113-amino-acid chain; its full sequence is MKTLPKERRYETLSYLPPLTDQQIAKQVEFLLDQGFIPGVEFEEDPQPETHFWTMWKLPFFGGATANEVLAEVRECRSENPNCYIRVIGFDNIKQCQTVSFIVHKPNQNQGRY.

Belongs to the RuBisCO small chain family. In terms of assembly, heterohexadecamer of 8 large and 8 small subunits. RuBisCO interacts with the C-terminus of CcmM, and can be found in complexes that also include carbonic anhydrase (ccaA).

The protein resides in the carboxysome. In terms of biological role, ruBisCO catalyzes two reactions: the carboxylation of D-ribulose 1,5-bisphosphate, the primary event in carbon dioxide fixation, as well as the oxidative fragmentation of the pentose substrate in the photorespiration process. Both reactions occur simultaneously and in competition at the same active site. Although the small subunit is not catalytic it is essential for maximal activity. The chain is Ribulose bisphosphate carboxylase small subunit from Synechocystis sp. (strain ATCC 27184 / PCC 6803 / Kazusa).